Reading from the N-terminus, the 314-residue chain is Ornithine carbamoyltransferase (314 aa).

Carbamoyl phosphate-binding positions include 58–61 (STRT), glutamine 85, arginine 109, and 136–139 (HPAQ). L-ornithine is bound by residues asparagine 169, aspartate 233, and 237–238 (SM). Residues 273 to 274 (CL) and arginine 301 contribute to the carbamoyl phosphate site.

Belongs to the aspartate/ornithine carbamoyltransferase superfamily. OTCase family.

The protein resides in the cytoplasm. It carries out the reaction carbamoyl phosphate + L-ornithine = L-citrulline + phosphate + H(+). It participates in amino-acid degradation; L-arginine degradation via ADI pathway; carbamoyl phosphate from L-arginine: step 2/2. Its function is as follows. Reversibly catalyzes the transfer of the carbamoyl group from carbamoyl phosphate (CP) to the N(epsilon) atom of ornithine (ORN) to produce L-citrulline. This chain is Ornithine carbamoyltransferase, found in Staphylothermus marinus (strain ATCC 43588 / DSM 3639 / JCM 9404 / F1).